The primary structure comprises 325 residues: tRNA dimethylallyltransferase (325 aa).

21-28 (GPTASGKS) provides a ligand contact to ATP. 23-28 (TASGKS) is a binding site for substrate. Residues 166 to 170 (QRLAR) form an interaction with substrate tRNA region.

This sequence belongs to the IPP transferase family. Monomer. Requires Mg(2+) as cofactor.

It carries out the reaction adenosine(37) in tRNA + dimethylallyl diphosphate = N(6)-dimethylallyladenosine(37) in tRNA + diphosphate. Catalyzes the transfer of a dimethylallyl group onto the adenine at position 37 in tRNAs that read codons beginning with uridine, leading to the formation of N6-(dimethylallyl)adenosine (i(6)A). The protein is tRNA dimethylallyltransferase of Acidiphilium cryptum (strain JF-5).